Consider the following 314-residue polypeptide: Olfactory receptor 5P81 (314 aa).

The Extracellular portion of the chain corresponds to Met1–Val28. Residue Asn8 is glycosylated (N-linked (GlcNAc...) asparagine). Residues Ile29–Ile49 form a helical membrane-spanning segment. Over Leu50–Gln57 the chain is Cytoplasmic. Residues Leu58 to Ser78 form a helical membrane-spanning segment. At Ser79–Ile102 the chain is on the extracellular side. The cysteines at positions 100 and 192 are disulfide-linked. A helical membrane pass occupies residues Gln103 to Tyr123. Residues Asp124–Ser136 lie on the Cytoplasmic side of the membrane. A helical membrane pass occupies residues Thr137–Ile157. Residues His158–Ile199 are Extracellular-facing. A helical membrane pass occupies residues Ile200–Ser220. Residues Tyr221 to Ala240 lie on the Cytoplasmic side of the membrane. Residues Phe241–Ile261 traverse the membrane as a helical segment. At Tyr262–Asn274 the chain is on the extracellular side. A helical transmembrane segment spans residues Lys275–Leu295. At Arg296 to Phe314 the chain is on the cytoplasmic side.

Belongs to the G-protein coupled receptor 1 family.

The protein localises to the cell membrane. Potential odorant receptor. The chain is Olfactory receptor 5P81 from Mus musculus (Mouse).